Here is a 240-residue protein sequence, read N- to C-terminus: Phosphatidylserine decarboxylase proenzyme (240 aa).

Ser205 functions as the Schiff-base intermediate with substrate; via pyruvic acid in the catalytic mechanism. A Pyruvic acid (Ser); by autocatalysis modification is found at Ser205.

Belongs to the phosphatidylserine decarboxylase family. PSD-A subfamily. As to quaternary structure, heterodimer of a large membrane-associated beta subunit and a small pyruvoyl-containing alpha subunit. The cofactor is pyruvate. In terms of processing, is synthesized initially as an inactive proenzyme. Formation of the active enzyme involves a self-maturation process in which the active site pyruvoyl group is generated from an internal serine residue via an autocatalytic post-translational modification. Two non-identical subunits are generated from the proenzyme in this reaction, and the pyruvate is formed at the N-terminus of the alpha chain, which is derived from the carboxyl end of the proenzyme. The post-translation cleavage follows an unusual pathway, termed non-hydrolytic serinolysis, in which the side chain hydroxyl group of the serine supplies its oxygen atom to form the C-terminus of the beta chain, while the remainder of the serine residue undergoes an oxidative deamination to produce ammonia and the pyruvoyl prosthetic group on the alpha chain.

It is found in the cell membrane. The catalysed reaction is a 1,2-diacyl-sn-glycero-3-phospho-L-serine + H(+) = a 1,2-diacyl-sn-glycero-3-phosphoethanolamine + CO2. Its pathway is phospholipid metabolism; phosphatidylethanolamine biosynthesis; phosphatidylethanolamine from CDP-diacylglycerol: step 2/2. Functionally, catalyzes the formation of phosphatidylethanolamine (PtdEtn) from phosphatidylserine (PtdSer). The protein is Phosphatidylserine decarboxylase proenzyme of Rhodopirellula baltica (strain DSM 10527 / NCIMB 13988 / SH1).